The chain runs to 209 residues: 2-phospho-L-lactate guanylyltransferase (209 aa).

Belongs to the CofC family. Homodimer.

It carries out the reaction (2S)-2-phospholactate + GTP + H(+) = (2S)-lactyl-2-diphospho-5'-guanosine + diphosphate. Its pathway is cofactor biosynthesis; coenzyme F420 biosynthesis. In terms of biological role, guanylyltransferase that catalyzes the activation of (2S)-2-phospholactate (2-PL) as (2S)-lactyl-2-diphospho-5'-guanosine, via the condensation of 2-PL with GTP. It is involved in the biosynthesis of coenzyme F420, a hydride carrier cofactor. In Halobacterium salinarum (strain ATCC 29341 / DSM 671 / R1), this protein is 2-phospho-L-lactate guanylyltransferase.